A 64-amino-acid polypeptide reads, in one-letter code: Large ribosomal subunit protein bL35 (64 aa).

Residues 1-56 (MPKMKSNKSVAARFKLTGSGQLKRTRPGKRHKLSKKSSQEKRNLSKQPLVDKGQVG) are disordered. Over residues 23 to 35 (KRTRPGKRHKLSK) the composition is skewed to basic residues.

Belongs to the bacterial ribosomal protein bL35 family.

The chain is Large ribosomal subunit protein bL35 from Chlamydia abortus (strain DSM 27085 / S26/3) (Chlamydophila abortus).